The chain runs to 189 residues: GTP cyclohydrolase 1 (189 aa).

Positions 79, 82, and 150 each coordinate Zn(2+).

It belongs to the GTP cyclohydrolase I family. As to quaternary structure, toroid-shaped homodecamer, composed of two pentamers of five dimers.

The enzyme catalyses GTP + H2O = 7,8-dihydroneopterin 3'-triphosphate + formate + H(+). The protein operates within cofactor biosynthesis; 7,8-dihydroneopterin triphosphate biosynthesis; 7,8-dihydroneopterin triphosphate from GTP: step 1/1. This is GTP cyclohydrolase 1 from Rickettsia massiliae (strain Mtu5).